The chain runs to 550 residues: Hydroxylamine reductase (550 aa).

4 residues coordinate [2Fe-2S] cluster: Cys-3, Cys-6, Cys-18, and Cys-25. Residues His-249, Glu-273, Cys-317, Cys-405, Cys-433, Cys-458, Glu-492, and Lys-494 each coordinate hybrid [4Fe-2O-2S] cluster. Cys-405 is subject to Cysteine persulfide.

The protein belongs to the HCP family. [2Fe-2S] cluster is required as a cofactor. It depends on hybrid [4Fe-2O-2S] cluster as a cofactor.

It localises to the cytoplasm. It carries out the reaction A + NH4(+) + H2O = hydroxylamine + AH2 + H(+). Functionally, catalyzes the reduction of hydroxylamine to form NH(3) and H(2)O. The chain is Hydroxylamine reductase from Salmonella paratyphi A (strain ATCC 9150 / SARB42).